Reading from the N-terminus, the 1415-residue chain is Uveal autoantigen with coiled-coil domains and ankyrin repeats (1415 aa).

5 ANK repeats span residues 69-98 (EGRS…DITT), 102-131 (AGRN…PTEH), 135-164 (QGRT…SVNA), 168-197 (DGRT…EINS), and 201-230 (QNRT…DVSL). Residues 288–376 (VKSSQREHRN…TIESLKNRFK (89 aa)) are a coiled coil. The stretch at 617–646 (ELLAKLTLSVPTEKFESMKSLLSSEVNEKV) is one ANK 6 repeat. The stretch at 759-1381 (TVEELKKQLL…TDRQHQEVIA (623 aa)) forms a coiled coil. A Glycyl lysine isopeptide (Lys-Gly) (interchain with G-Cter in SUMO2) cross-link involves residue lysine 1034. The segment covering 1186-1201 (LREKEEESQNKTEEVS) has biased composition (basic and acidic residues). Residues 1186 to 1205 (LREKEEESQNKTEEVSKLQS) form a disordered region.

In terms of assembly, component of the apoptosome complex, composed of APAF1, pro-caspase-9 and UACA. In the complex, it probably interacts directly with APAF1. Interacts with LGALS3, ARF6 and ACTB. Interacts with RAB39A. Highly expressed in adrenal, testis, kidney and large intestine.

It localises to the nucleus. It is found in the cytoplasm. Its subcellular location is the cytoskeleton. In terms of biological role, regulates APAF1 expression and plays an important role in the regulation of stress-induced apoptosis. Promotes apoptosis by regulating three pathways, apoptosome up-regulation, LGALS3/galectin-3 down-regulation and NF-kappa-B inactivation. Regulates the redistribution of APAF1 into the nucleus after proapoptotic stress. Down-regulates the expression of LGALS3 by inhibiting NFKB1. Modulates isoactin dynamics to regulate the morphological alterations required for cell growth and motility. Interaction with ARF6 may modulate cell shape and motility after injury. May be involved in multiple neurite formation. This chain is Uveal autoantigen with coiled-coil domains and ankyrin repeats (UACA), found in Canis lupus familiaris (Dog).